We begin with the raw amino-acid sequence, 445 residues long: Phosphoglucosamine mutase (445 aa).

Ser-102 functions as the Phosphoserine intermediate in the catalytic mechanism. Residues Ser-102, Asp-241, Asp-243, and Asp-245 each coordinate Mg(2+). Residue Ser-102 is modified to Phosphoserine.

It belongs to the phosphohexose mutase family. The cofactor is Mg(2+). Post-translationally, activated by phosphorylation.

It catalyses the reaction alpha-D-glucosamine 1-phosphate = D-glucosamine 6-phosphate. Its function is as follows. Catalyzes the conversion of glucosamine-6-phosphate to glucosamine-1-phosphate. This is Phosphoglucosamine mutase from Klebsiella pneumoniae (strain 342).